The following is a 214-amino-acid chain: Octanoyltransferase (214 aa).

One can recognise a BPL/LPL catalytic domain in the interval 28–210 (GTAEDALYLL…EFGKVFTDTA (183 aa)). Substrate contacts are provided by residues 73-80 (RGGNITCH), 140-142 (SIG), and 153-155 (GLS). Catalysis depends on C171, which acts as the Acyl-thioester intermediate.

Belongs to the LipB family.

The protein resides in the cytoplasm. It catalyses the reaction octanoyl-[ACP] + L-lysyl-[protein] = N(6)-octanoyl-L-lysyl-[protein] + holo-[ACP] + H(+). Its pathway is protein modification; protein lipoylation via endogenous pathway; protein N(6)-(lipoyl)lysine from octanoyl-[acyl-carrier-protein]: step 1/2. In terms of biological role, catalyzes the transfer of endogenously produced octanoic acid from octanoyl-acyl-carrier-protein onto the lipoyl domains of lipoate-dependent enzymes. Lipoyl-ACP can also act as a substrate although octanoyl-ACP is likely to be the physiological substrate. This chain is Octanoyltransferase, found in Maridesulfovibrio salexigens (strain ATCC 14822 / DSM 2638 / NCIMB 8403 / VKM B-1763) (Desulfovibrio salexigens).